The following is a 456-amino-acid chain: Glutamate-gated chloride channel (456 aa).

The signal sequence occupies residues 1–22; the sequence is MGSGHYFWAILYFASLCSASLA. At 23 to 245 the chain is on the extracellular side; it reads NNAKINFREK…VDLLFKREFS (223 aa). R71, R90, and S154 together coordinate L-glutamate. An intrachain disulfide couples C163 to C177. S183 is a binding site for L-glutamate. Cysteines 222 and 233 form a disulfide. The chain crosses the membrane as a helical span at residues 246-268; that stretch reads YYLIQIYIPCCMLVIVSWVSFWL. The Cytoplasmic portion of the chain corresponds to 269–273; the sequence is DQGAV. Residues 274-295 form a helical membrane-spanning segment; the sequence is PARVSLGVTTLLTMATQTSGIN. Topologically, residues 296 to 302 are extracellular; the sequence is ASLPPVS. Residues 303-323 form a helical membrane-spanning segment; the sequence is YTKAIDVWTGVCLTFVFGALL. Residues 324 to 426 lie on the Cytoplasmic side of the membrane; it reads EFALVNYASR…RQCSRSKRID (103 aa). The helical transmembrane segment at 427–450 threads the bilayer; sequence VISRITFPLVFALFNLVYWSTYLF. The Extracellular segment spans residues 451–456; it reads REEEDE.

It belongs to the ligand-gated ion channel (TC 1.A.9) family. Glutamate-gated chloride channel (TC 1.A.9.4) subfamily. As to quaternary structure, pentamer. Homomultimer. Expressed in the medulla layers (at protein level). Expressed in all major ON pathway medulla neurons (Mi1, Tm3, Mi4, and Mi9) and in OFF pathway neurons (Tm1, Tm2, Tm4, and Tm9).

It is found in the postsynaptic cell membrane. Its subcellular location is the cell membrane. With respect to regulation, glutamate binding triggers a rapidly reversible current, while the anti-helmintic drug ivermectin triggers a permanently open channel configuration. Inhibited by picrotoxin. Functionally, glutamate-gated chloride channel subunit. Together with Gamma-aminobutyric acid receptor Rdl, plays an important role in the visual response by regulating the activity of ON/OFF-selective neurons. This Drosophila melanogaster (Fruit fly) protein is Glutamate-gated chloride channel (GluClalpha).